The chain runs to 333 residues: DNA-directed RNA polymerase subunit alpha (333 aa).

An alpha N-terminal domain (alpha-NTD) region spans residues 1 to 234 (MQISVNEFLT…QQLAAFVDLK (234 aa)). Residues 248-333 (IDPILLRPVD…SLKKDDKATA (86 aa)) are alpha C-terminal domain (alpha-CTD).

The protein belongs to the RNA polymerase alpha chain family. In terms of assembly, homodimer. The RNAP catalytic core consists of 2 alpha, 1 beta, 1 beta' and 1 omega subunit. When a sigma factor is associated with the core the holoenzyme is formed, which can initiate transcription.

The enzyme catalyses RNA(n) + a ribonucleoside 5'-triphosphate = RNA(n+1) + diphosphate. Functionally, DNA-dependent RNA polymerase catalyzes the transcription of DNA into RNA using the four ribonucleoside triphosphates as substrates. This chain is DNA-directed RNA polymerase subunit alpha, found in Pseudomonas entomophila (strain L48).